Here is a 783-residue protein sequence, read N- to C-terminus: MRQKTLDVLEFDKIKSFVASETISDLGREKVSKMSPATDFETVEFQMNETDEISQIYNKHRLPSLSGLAKISPLIHRANIGGVLNVTELNLVKRLIQVQNQFKTFYNQLLEEDEQVVKYPILNDKMNQLPILSDLFQEINEKCDTHDLYDSASYELQGIRSKISSTNQRIRQNLDRIVKSQANQKKLSDAIITVRNDRNVIPVKAEYRQDFKGIVHDQSASGQTLYIEPSSIVEMNNQISRLRNDEAVERERILTELTGMVAAEADGCLIAESVMGQIDFLTAKARYARSIKGTKPTFYKDRTVYLPNAYHPLLNKDTVVANTIEFVDDIETVIITGPNTGGKTVTLKTLGLIIIMAQSGLLIPTLDGSQLSVFENVYCDIGDEQSIEQSLSTFSSHMKNIVEILQETDKNSLVLFDELGAGTDPSEGAALAMSILDHVREIGSLVMATTHYPELKAYSYNREGVMNASVEFDVNTLSPTYKLLMGVPGRSNAFDISRKLGLSLGIINKAKTMIGTDEQEINSMIESLEKNSKRVDEQRIELDRLLKEARKTHDDLEHQYEQYKSYEKKLMDEAKEKANQRVKSATKEADSILKELRTLRDQKGADVKEHELIDKKKQLDDQYEAKSLKQNVQKQKYDEIHAGDEVKVLSYGQKGEVLELVSEEEAVVQMGIIKMKLPIEDLEKTKKKKEKPSKMVTRQNRQTIKTELHLRGYRYEEAVSELDQYIDQAVLSNYEQVYIIHGKGTGALQKAVQNHLNKHKSVKSYRGGMPSEGGFGVTVAELK.

Position 337-344 (337-344) interacts with ATP; it reads GPNTGGKT. The Smr domain maps to 708 to 783; it reads LHLRGYRYEE…GFGVTVAELK (76 aa).

This sequence belongs to the DNA mismatch repair MutS family. MutS2 subfamily. As to quaternary structure, homodimer. Binds to stalled ribosomes, contacting rRNA.

Functionally, endonuclease that is involved in the suppression of homologous recombination and thus may have a key role in the control of bacterial genetic diversity. Acts as a ribosome collision sensor, splitting the ribosome into its 2 subunits. Detects stalled/collided 70S ribosomes which it binds and splits by an ATP-hydrolysis driven conformational change. Acts upstream of the ribosome quality control system (RQC), a ribosome-associated complex that mediates the extraction of incompletely synthesized nascent chains from stalled ribosomes and their subsequent degradation. Probably generates substrates for RQC. The sequence is that of Endonuclease MutS2 from Staphylococcus haemolyticus (strain JCSC1435).